Here is a 402-residue protein sequence, read N- to C-terminus: Apolipoprotein L3 (402 aa).

This sequence belongs to the apolipoprotein L family. Widely expressed; the highest levels are in prostate, lung and placenta; also detected in kidney, bone marrow, spleen, thymus, spinal cord, adrenal gland, salivary gland, trachea and mammary gland; levels are low in brain, heart, fetal liver, pancreas and testis.

Its subcellular location is the cytoplasm. Its function is as follows. May affect the movement of lipids in the cytoplasm or allow the binding of lipids to organelles. The chain is Apolipoprotein L3 (APOL3) from Homo sapiens (Human).